The sequence spans 335 residues: Heat-inducible transcription repressor HrcA (335 aa).

Belongs to the HrcA family.

Negative regulator of class I heat shock genes (grpE-dnaK-dnaJ and groELS operons). Prevents heat-shock induction of these operons. In Mesomycoplasma hyopneumoniae (strain 232) (Mycoplasma hyopneumoniae), this protein is Heat-inducible transcription repressor HrcA.